We begin with the raw amino-acid sequence, 176 residues long: Tubulin polymerization-promoting protein family member 3 (176 aa).

The interval 126-152 (TDTSKYTGSHKERFDESGKGKGKGGRE) is disordered. Residues 134–152 (SHKERFDESGKGKGKGGRE) show a composition bias toward basic and acidic residues.

It belongs to the TPPP family.

Its subcellular location is the cytoplasm. It is found in the cytoskeleton. Functionally, regulator of microtubule dynamic that has microtubule bundling activity. This Xenopus tropicalis (Western clawed frog) protein is Tubulin polymerization-promoting protein family member 3 (tppp3).